We begin with the raw amino-acid sequence, 404 residues long: Plasma serine protease inhibitor (404 aa).

Positions 1 to 19 (MRLCLFLCLVLLGPRMATL) are cleaved as a signal peptide. A propeptide spans 20 to 24 (RRSQK) (removed in mature form). Thr-35 and Thr-36 each carry an O-linked (GalNAc...) threonine glycan. Asn-245, Asn-258, and Asn-334 each carry an N-linked (GlcNAc...) asparagine glycan.

Belongs to the serpin family. Forms protease inhibiting heterodimers in extracellular body fluids with serine proteases such as activated protein C/coagulation factor V/F5, acrosin/ACR, chymotrypsinogen B/CTRB1, prothrombin/F2, factor Xa/F10, factor XI/F11, kallikrein/KLKB1, tissue kallikrein, trypsin/PRSS1, prostate specific antigen/KLK3, tissue plasminogen activator/PLAT and urinary plasminogen activator/PLAU. Forms membrane-anchored serine proteases inhibiting heterodimers with TMPRSS7 and TMPRSS11E. Interacts with SEMG2. In terms of processing, N-glycosylated; glycans consist of a mixture of sialylated bi- (including sialyl-Lewis X epitopes), tri- and tetra-antennary complex-type chains; affects the maximal heparin- and thrombomodulin-enhanced rates of thrombin inhibition. O-glycosylated; further modified with 2 sialic acid residues. Proteolytically cleaved at the N-terminus; inhibits slightly the heparin- and thrombomodulin-enhanced rates of thrombin inhibition. N- and O-glycosylated. Proteolytically cleaved. Inhibition of proteases is accompanied by formation of a stable enzyme-inhibitor complex and by degradation of the serpin to lower molecular weight derivatives. Expressed strongly in the liver, and moderately in the kidney and testis, but not in other tissues tested.

The protein resides in the secreted. Its subcellular location is the extracellular space. Its inhibitory activity is greatly enhanced in the presence of glycosaminoglycans, heparin, thrombomodulin and phospholipids vesicles. Its function is as follows. Heparin-dependent serine protease inhibitor acting in body fluids and secretions. Inactivates serine proteases by binding irreversibly to their serine activation site. Involved in the regulation of intravascular and extravascular proteolytic activities. Plays hemostatic roles in the blood plasma. Acts as a procoagulant and pro-inflammatory factor by inhibiting the anticoagulant activated protein C factor as well as the generation of activated protein C factor by the thrombin/thrombomodulin complex. Acts as an anticoagulant factor by inhibiting blood coagulation factors like prothrombin, factor XI, factor Xa, plasma kallikrein and fibrinolytic enzymes such as tissue- and urinary-type plasminogen activators. In seminal plasma, inactivates several serine proteases implicated in the reproductive system. Inhibits the serpin acrosin; indirectly protects component of the male genital tract from being degraded by excessive released acrosin. Inhibits tissue- and urinary-type plasminogen activator, prostate-specific antigen and kallikrein activities; has a control on the sperm motility and fertilization. Inhibits the activated protein C-catalyzed degradation of SEMG1 and SEMG2; regulates the degradation of semenogelin during the process of transfer of spermatozoa from the male reproductive tract into the female tract. In urine, inhibits urinary-type plasminogen activator and kallikrein activities. Inactivates membrane-anchored serine proteases activities such as MPRSS7 and TMPRSS11E. Inhibits urinary-type plasminogen activator-dependent tumor cell invasion and metastasis. May also play a non-inhibitory role in seminal plasma and urine as a hydrophobic hormone carrier by its binding to retinoic acid. The sequence is that of Plasma serine protease inhibitor (SERPINA5) from Bos taurus (Bovine).